Reading from the N-terminus, the 374-residue chain is UDP-N-acetylglucosamine--N-acetylmuramyl-(pentapeptide) pyrophosphoryl-undecaprenol N-acetylglucosamine transferase (374 aa).

UDP-N-acetyl-alpha-D-glucosamine contacts are provided by residues 13 to 15 (TGG), Asn124, Arg165, Ser193, and Gln294.

This sequence belongs to the glycosyltransferase 28 family. MurG subfamily.

It localises to the cell inner membrane. It catalyses the reaction di-trans,octa-cis-undecaprenyl diphospho-N-acetyl-alpha-D-muramoyl-L-alanyl-D-glutamyl-meso-2,6-diaminopimeloyl-D-alanyl-D-alanine + UDP-N-acetyl-alpha-D-glucosamine = di-trans,octa-cis-undecaprenyl diphospho-[N-acetyl-alpha-D-glucosaminyl-(1-&gt;4)]-N-acetyl-alpha-D-muramoyl-L-alanyl-D-glutamyl-meso-2,6-diaminopimeloyl-D-alanyl-D-alanine + UDP + H(+). It participates in cell wall biogenesis; peptidoglycan biosynthesis. Cell wall formation. Catalyzes the transfer of a GlcNAc subunit on undecaprenyl-pyrophosphoryl-MurNAc-pentapeptide (lipid intermediate I) to form undecaprenyl-pyrophosphoryl-MurNAc-(pentapeptide)GlcNAc (lipid intermediate II). The sequence is that of UDP-N-acetylglucosamine--N-acetylmuramyl-(pentapeptide) pyrophosphoryl-undecaprenol N-acetylglucosamine transferase from Rhizobium etli (strain ATCC 51251 / DSM 11541 / JCM 21823 / NBRC 15573 / CFN 42).